Here is a 331-residue protein sequence, read N- to C-terminus: MIIENNKKKALEKALDKIEKQFGKGSIMTLGENRSMDIETISTGSLSLDIALGTGGLPMGRIVEIYGPESSGKTTLTLEVIYEAQKKGKICAFIDAEHALDPIYAKNLGVDINNLLCSQPDNGEQALEICDSLTRSGAVDLIIVDSVAALTPKAEIDGEIGDLHLGLAARMMSQAMRKLAGNLKNANTLLIFINQIRVKIGTIFGSPEVTTGGNALKFYASVRLDIRKIGTIKDGDIIIGNETRVKVVKNKISAPFRQAEFQILYGNGINTEGELITLGVNHNIIEKSGSWYSYNKNKIGQGKNNACNFLKNNPNISKEISRKIREINLIK.

Position 67-74 (67-74 (GPESSGKT)) interacts with ATP.

This sequence belongs to the RecA family.

It localises to the cytoplasm. Functionally, can catalyze the hydrolysis of ATP in the presence of single-stranded DNA, the ATP-dependent uptake of single-stranded DNA by duplex DNA, and the ATP-dependent hybridization of homologous single-stranded DNAs. It interacts with LexA causing its activation and leading to its autocatalytic cleavage. In Wigglesworthia glossinidia brevipalpis, this protein is Protein RecA.